Consider the following 161-residue polypeptide: Small ribosomal subunit protein uS8m (161 aa).

Belongs to the universal ribosomal protein uS8 family. Component of the mitochondrial small ribosomal subunit (mt-SSU). Mature N.crassa 74S mitochondrial ribosomes consist of a small (37S) and a large (54S) subunit. The 37S small subunit contains a 16S ribosomal RNA (16S mt-rRNA) and 32 different proteins. The 54S large subunit contains a 23S rRNA (23S mt-rRNA) and 42 different proteins.

It localises to the mitochondrion. Functionally, component of the mitochondrial ribosome (mitoribosome), a dedicated translation machinery responsible for the synthesis of mitochondrial genome-encoded proteins, including at least some of the essential transmembrane subunits of the mitochondrial respiratory chain. The mitoribosomes are attached to the mitochondrial inner membrane and translation products are cotranslationally integrated into the membrane. The chain is Small ribosomal subunit protein uS8m (mrps8) from Neurospora crassa (strain ATCC 24698 / 74-OR23-1A / CBS 708.71 / DSM 1257 / FGSC 987).